The primary structure comprises 68 residues: Large ribosomal subunit protein bL35 (68 aa).

Positions 29–68 (GGVSHYNTKKSSKRKRQGRKPQYVPKNLEHKVKALLPNDV) are disordered. Residues 35-47 (NTKKSSKRKRQGR) show a composition bias toward basic residues.

This sequence belongs to the bacterial ribosomal protein bL35 family.

This is Large ribosomal subunit protein bL35 from Sulfurihydrogenibium sp. (strain YO3AOP1).